Here is a 224-residue protein sequence, read N- to C-terminus: Phosphoglycolate phosphatase (224 aa).

The active-site Nucleophile is the aspartate 11. Mg(2+) contacts are provided by aspartate 11, aspartate 13, and aspartate 177.

This sequence belongs to the HAD-like hydrolase superfamily. CbbY/CbbZ/Gph/YieH family. The cofactor is Mg(2+).

It catalyses the reaction 2-phosphoglycolate + H2O = glycolate + phosphate. The protein operates within organic acid metabolism; glycolate biosynthesis; glycolate from 2-phosphoglycolate: step 1/1. Specifically catalyzes the dephosphorylation of 2-phosphoglycolate. Is involved in the dissimilation of the intracellular 2-phosphoglycolate formed during the DNA repair of 3'-phosphoglycolate ends, a major class of DNA lesions induced by oxidative stress. The polypeptide is Phosphoglycolate phosphatase (Haemophilus influenzae (strain ATCC 51907 / DSM 11121 / KW20 / Rd)).